A 271-amino-acid chain; its full sequence is L-aspartate dehydrogenase (271 aa).

The NAD(+) site is built by Ala124 and Asn192. His222 is a catalytic residue.

The protein belongs to the L-aspartate dehydrogenase family.

The enzyme catalyses L-aspartate + NADP(+) + H2O = oxaloacetate + NH4(+) + NADPH + H(+). It catalyses the reaction L-aspartate + NAD(+) + H2O = oxaloacetate + NH4(+) + NADH + H(+). Its pathway is cofactor biosynthesis; NAD(+) biosynthesis; iminoaspartate from L-aspartate (dehydrogenase route): step 1/1. Specifically catalyzes the NAD or NADP-dependent dehydrogenation of L-aspartate to iminoaspartate. The chain is L-aspartate dehydrogenase from Methanococcoides burtonii (strain DSM 6242 / NBRC 107633 / OCM 468 / ACE-M).